Consider the following 29-residue polypeptide: Cytochrome b6-f complex subunit 8 (29 aa).

The chain crosses the membrane as a helical span at residues 3 to 23 (IVDIAWAALMVVFTFSLSLVV).

It belongs to the PetN family. As to quaternary structure, the 4 large subunits of the cytochrome b6-f complex are cytochrome b6, subunit IV (17 kDa polypeptide, PetD), cytochrome f and the Rieske protein, while the 4 small subunits are PetG, PetL, PetM and PetN. The complex functions as a dimer.

It is found in the plastid. It localises to the chloroplast thylakoid membrane. In terms of biological role, component of the cytochrome b6-f complex, which mediates electron transfer between photosystem II (PSII) and photosystem I (PSI), cyclic electron flow around PSI, and state transitions. The protein is Cytochrome b6-f complex subunit 8 of Gnetum parvifolium (Small-leaved jointfir).